Consider the following 810-residue polypeptide: DNA replication licensing factor mcm-6 (810 aa).

Residues isoleucine 346 to isoleucine 553 form the MCM domain. ATP is bound by residues serine 400, threonine 401, alanine 402, lysine 403, serine 404, and asparagine 505. An Arginine finger motif is present at residues serine 529–aspartate 532. Residues arginine 622 and glutamate 625 each coordinate ADP. The interval lysine 685–lysine 705 is disordered.

Belongs to the MCM family. Component of the mcm2-7 complex. The complex forms a toroidal hexameric ring with the proposed subunit order mcm2-mcm6-mcm4-mcm7-mcm3-mcm5 (By simililarity).

It is found in the nucleus. The enzyme catalyses ATP + H2O = ADP + phosphate + H(+). Functionally, acts as a component of the MCM2-7 complex (MCM complex) which is the replicative helicase essential for 'once per cell cycle' DNA replication initiation and elongation in eukaryotic cells. Core component of CDC45-MCM-GINS (CMG) helicase, the molecular machine that unwinds template DNA during replication, and around which the replisome is built. The active ATPase sites in the MCM2-7 ring are formed through the interaction surfaces of two neighboring subunits such that a critical structure of a conserved arginine finger motif is provided in trans relative to the ATP-binding site of the Walker A box of the adjacent subunit. The six ATPase active sites, however, are likely to contribute differentially to the complex helicase activity. In Caenorhabditis briggsae, this protein is DNA replication licensing factor mcm-6.